Here is a 691-residue protein sequence, read N- to C-terminus: DNA ligase (691 aa).

Residues 41–45 (DAEYD), 90–91 (SL), and glutamate 130 each bind NAD(+). Lysine 132 serves as the catalytic N6-AMP-lysine intermediate. Arginine 153, glutamate 190, lysine 307, and lysine 331 together coordinate NAD(+). Zn(2+) contacts are provided by cysteine 425, cysteine 428, cysteine 443, and cysteine 449. Positions 610-691 (APQGVLAGKT…LHQLLEGNTP (82 aa)) constitute a BRCT domain.

Belongs to the NAD-dependent DNA ligase family. LigA subfamily. Mg(2+) serves as cofactor. It depends on Mn(2+) as a cofactor.

The enzyme catalyses NAD(+) + (deoxyribonucleotide)n-3'-hydroxyl + 5'-phospho-(deoxyribonucleotide)m = (deoxyribonucleotide)n+m + AMP + beta-nicotinamide D-nucleotide.. DNA ligase that catalyzes the formation of phosphodiester linkages between 5'-phosphoryl and 3'-hydroxyl groups in double-stranded DNA using NAD as a coenzyme and as the energy source for the reaction. It is essential for DNA replication and repair of damaged DNA. The polypeptide is DNA ligase (Burkholderia cenocepacia (strain HI2424)).